A 271-amino-acid polypeptide reads, in one-letter code: Acyl-[acyl-carrier-protein]--UDP-N-acetylglucosamine O-acyltransferase (271 aa).

It belongs to the transferase hexapeptide repeat family. LpxA subfamily. In terms of assembly, homotrimer.

The protein localises to the cytoplasm. It carries out the reaction a (3R)-hydroxyacyl-[ACP] + UDP-N-acetyl-alpha-D-glucosamine = a UDP-3-O-[(3R)-3-hydroxyacyl]-N-acetyl-alpha-D-glucosamine + holo-[ACP]. It functions in the pathway glycolipid biosynthesis; lipid IV(A) biosynthesis; lipid IV(A) from (3R)-3-hydroxytetradecanoyl-[acyl-carrier-protein] and UDP-N-acetyl-alpha-D-glucosamine: step 1/6. Involved in the biosynthesis of lipid A, a phosphorylated glycolipid that anchors the lipopolysaccharide to the outer membrane of the cell. The protein is Acyl-[acyl-carrier-protein]--UDP-N-acetylglucosamine O-acyltransferase of Agrobacterium fabrum (strain C58 / ATCC 33970) (Agrobacterium tumefaciens (strain C58)).